The primary structure comprises 147 residues: Hemoglobin subunit epsilon (147 aa).

The Globin domain maps to 3-147 (HFTAEEKATI…VATALAHKYH (145 aa)). Residues serine 14 and serine 51 each carry the phosphoserine modification. 2 residues coordinate heme b: histidine 64 and histidine 93.

The protein belongs to the globin family. Heterotetramer of two alpha chains and two epsilon chains in early embryonic hemoglobin Gower-2; two zeta chains and two epsilon chains in early embryonic hemoglobin Gower-1. As to expression, red blood cells.

Functionally, the epsilon chain is a beta-type chain of early mammalian embryonic hemoglobin. The polypeptide is Hemoglobin subunit epsilon (HBE1) (Daubentonia madagascariensis (Aye-aye)).